A 248-amino-acid polypeptide reads, in one-letter code: Adenosylcobinamide-GDP ribazoletransferase (248 aa).

6 consecutive transmembrane segments (helical) span residues 28–48, 103–123, 126–146, 169–189, 193–213, and 225–245; these read LFWF…AGYL, VGSF…IVLV, LAFG…LVQV, AGIQ…LLLM, MLPS…MSLL, and VLGA…VFLA.

This sequence belongs to the CobS family. Mg(2+) is required as a cofactor.

Its subcellular location is the cell inner membrane. It catalyses the reaction alpha-ribazole + adenosylcob(III)inamide-GDP = adenosylcob(III)alamin + GMP + H(+). The enzyme catalyses alpha-ribazole 5'-phosphate + adenosylcob(III)inamide-GDP = adenosylcob(III)alamin 5'-phosphate + GMP + H(+). It participates in cofactor biosynthesis; adenosylcobalamin biosynthesis; adenosylcobalamin from cob(II)yrinate a,c-diamide: step 7/7. Its function is as follows. Joins adenosylcobinamide-GDP and alpha-ribazole to generate adenosylcobalamin (Ado-cobalamin). Also synthesizes adenosylcobalamin 5'-phosphate from adenosylcobinamide-GDP and alpha-ribazole 5'-phosphate. This Chlorobium phaeobacteroides (strain BS1) protein is Adenosylcobinamide-GDP ribazoletransferase.